A 215-amino-acid chain; its full sequence is MPVILNFSSERVLSESELEALRHVGRVSQSEQLVVRGRTMRLHHISFMDSFSVEPVSGGLLDRLSARGHRLLAENLEIQLNRGHTFLQAFRLYMEQSRATPCTRQNVSSAIQNKINSHAFTVSHQDFSCHEQHLNCPITLCIPETGVFVRNAKNSEICSLYDHNALTELIRRNAPHPLSREPFVPEMIVSKDECHFNLIEQYFCILATQNICTRI.

Positions 136–189 are RING/U-box domain; that stretch reads CPITLCIPETGVFVRNAKNSEICSLYDHNALTELIRRNAPHPLSREPFVPEMIV. Residues 213–215 carry the PDZ-binding motif motif; the sequence is TRI.

It belongs to the NleG E3 ligase family. In terms of assembly, interacts with host GOPC (human protein). Post-translationally, two sizes of protein are detected upon expression in C.rodentium; only the smaller protein is secreted.

It localises to the secreted. The protein localises to the host cytoplasm. It carries out the reaction S-ubiquitinyl-[E2 ubiquitin-conjugating enzyme]-L-cysteine + [acceptor protein]-L-lysine = [E2 ubiquitin-conjugating enzyme]-L-cysteine + N(6)-ubiquitinyl-[acceptor protein]-L-lysine.. In terms of biological role, effector proteins function to alter host cell physiology and promote bacterial survival in host tissues. This protein is an E3 ubiquitin-protein ligase that probably interferes with the host's ubiquitination pathway and targets host proteins for proteasomal degradation. Can ubiquitinate ubiquitin, giving rise to polyubiquitin chains (in vitro). Does not complement an nleG8 deletion in C.rodentium. The polypeptide is E3 ubiquitin-protein ligase NleG (Escherichia coli O157:H7).